The primary structure comprises 400 residues: Protein screw (400 aa).

Residues methionine 1–alanine 16 form the signal peptide. Positions threonine 17–arginine 277 are excised as a propeptide. N-linked (GlcNAc...) asparagine glycosylation is found at asparagine 165, asparagine 189, asparagine 201, asparagine 304, and asparagine 342. Disulfide bonds link cysteine 300–cysteine 365, cysteine 329–cysteine 397, and cysteine 333–cysteine 399.

Belongs to the TGF-beta family. Heterodimers of scw/dpp are the active subunit, dpp/dpp homodimers elicit a basal response and scw/scw homodimers alone are ineffective in specifying a dorsal pattern. Ubiquitously expressed during early stages of embryogenesis, but the effect on development appears graded and is restricted to the dorsal side of the embryo.

Its subcellular location is the secreted. Part of the signal that specifies dorsal cell fates in the embryo. Acts together with dpp. This is Protein screw (scw) from Drosophila melanogaster (Fruit fly).